Here is a 65-residue protein sequence, read N- to C-terminus: Large ribosomal subunit protein uL29 (65 aa).

This sequence belongs to the universal ribosomal protein uL29 family.

The sequence is that of Large ribosomal subunit protein uL29 from Acidithiobacillus ferrooxidans (strain ATCC 23270 / DSM 14882 / CIP 104768 / NCIMB 8455) (Ferrobacillus ferrooxidans (strain ATCC 23270)).